The sequence spans 184 residues: Protein DESIGUAL 3 (184 aa).

The signal sequence occupies residues 1–24 (MESELGFLVSVVIICADITATVLG). Residues 34-45 (APHHHHQQHSRH) are compositionally biased toward basic residues. The segment at 34–53 (APHHHHQQHSRHSGSGCRRS) is disordered. 3 consecutive transmembrane segments (helical) span residues 62-82 (GVAA…LGGC), 99-119 (ILAV…YSTL), and 140-160 (FFLI…AYYV). N-linked (GlcNAc...) asparagine glycosylation occurs at asparagine 180.

The protein belongs to the DESIGUAL family. In terms of tissue distribution, mainly expressed in roots, inflorescences and developing leaves, and, at low levels, in mature leaves.

The protein resides in the endoplasmic reticulum membrane. Involved, partially redundantly with VCC/DEAL1 and DEAL2, to ensure bilateral symmetry development and early leaf margin patterning, probably via the regulation of auxin and CUC2 distribution. The sequence is that of Protein DESIGUAL 3 from Arabidopsis thaliana (Mouse-ear cress).